The sequence spans 377 residues: Probable dehydratase NIT22 (377 aa).

NADP(+)-binding residues include Lys-101 and Arg-196. The interval Glu-220–Phe-243 is disordered. The MaoC-like domain maps to Pro-233 to Lys-332. NADP(+)-binding residues include Thr-265 and Ile-287.

The protein belongs to the short-chain dehydrogenases/reductases (SDR) family.

It functions in the pathway siderophore biosynthesis. Probable dehydratase; part of the gene cluster that mediates the biosynthesis of hydroxamate-containing siderophores that play a critical role in virulence via intracellular iron acquisition during macrophage infection. The protein is Probable dehydratase NIT22 of Ajellomyces capsulatus (Darling's disease fungus).